A 207-amino-acid polypeptide reads, in one-letter code: Large ribosomal subunit protein uL4 (207 aa).

The segment at 59–78 (GSGKKPFKQKGTGQARQGCK) is disordered.

It belongs to the universal ribosomal protein uL4 family. As to quaternary structure, part of the 50S ribosomal subunit.

One of the primary rRNA binding proteins, this protein initially binds near the 5'-end of the 23S rRNA. It is important during the early stages of 50S assembly. It makes multiple contacts with different domains of the 23S rRNA in the assembled 50S subunit and ribosome. Functionally, forms part of the polypeptide exit tunnel. The chain is Large ribosomal subunit protein uL4 from Geotalea daltonii (strain DSM 22248 / JCM 15807 / FRC-32) (Geobacter daltonii).